The following is a 754-amino-acid chain: Polyribonucleotide nucleotidyltransferase (754 aa).

Mg(2+) is bound by residues aspartate 525 and aspartate 531. One can recognise a KH domain in the interval 591-650 (PRITTIKVPVDKIGEVIGPKGKMINSITEETGASISIEDDGTVFVGASNGEAAQAAIDKI). One can recognise an S1 motif domain in the interval 662–731 (GERFLGTVVK…NRGKISLVLV (70 aa)).

Belongs to the polyribonucleotide nucleotidyltransferase family. It depends on Mg(2+) as a cofactor.

It localises to the cytoplasm. It catalyses the reaction RNA(n+1) + phosphate = RNA(n) + a ribonucleoside 5'-diphosphate. Its function is as follows. Involved in mRNA degradation. Catalyzes the phosphorolysis of single-stranded polyribonucleotides processively in the 3'- to 5'-direction. The sequence is that of Polyribonucleotide nucleotidyltransferase from Mycolicibacterium vanbaalenii (strain DSM 7251 / JCM 13017 / BCRC 16820 / KCTC 9966 / NRRL B-24157 / PYR-1) (Mycobacterium vanbaalenii).